The primary structure comprises 878 residues: Phosphoenolpyruvate carboxylase (878 aa).

Active-site residues include His-137 and Lys-545.

It belongs to the PEPCase type 1 family. Mg(2+) is required as a cofactor.

The enzyme catalyses oxaloacetate + phosphate = phosphoenolpyruvate + hydrogencarbonate. Forms oxaloacetate, a four-carbon dicarboxylic acid source for the tricarboxylic acid cycle. This is Phosphoenolpyruvate carboxylase from Proteus mirabilis (strain HI4320).